The primary structure comprises 423 residues: Putative competence-damage inducible protein (423 aa).

Belongs to the CinA family.

The polypeptide is Putative competence-damage inducible protein (Streptococcus pyogenes serotype M1).